The primary structure comprises 352 residues: UDP-N-acetylglucosamine--N-acetylmuramyl-(pentapeptide) pyrophosphoryl-undecaprenol N-acetylglucosamine transferase 2 (352 aa).

Residues 11 to 13 (SAG), Arg164, Ser194, and Gln289 each bind UDP-N-acetyl-alpha-D-glucosamine.

This sequence belongs to the glycosyltransferase 28 family. MurG subfamily.

The protein localises to the cell membrane. The enzyme catalyses di-trans,octa-cis-undecaprenyl diphospho-N-acetyl-alpha-D-muramoyl-L-alanyl-D-glutamyl-meso-2,6-diaminopimeloyl-D-alanyl-D-alanine + UDP-N-acetyl-alpha-D-glucosamine = di-trans,octa-cis-undecaprenyl diphospho-[N-acetyl-alpha-D-glucosaminyl-(1-&gt;4)]-N-acetyl-alpha-D-muramoyl-L-alanyl-D-glutamyl-meso-2,6-diaminopimeloyl-D-alanyl-D-alanine + UDP + H(+). It participates in cell wall biogenesis; peptidoglycan biosynthesis. Functionally, cell wall formation. Catalyzes the transfer of a GlcNAc subunit on undecaprenyl-pyrophosphoryl-MurNAc-pentapeptide (lipid intermediate I) to form undecaprenyl-pyrophosphoryl-MurNAc-(pentapeptide)GlcNAc (lipid intermediate II). In Bacillus anthracis, this protein is UDP-N-acetylglucosamine--N-acetylmuramyl-(pentapeptide) pyrophosphoryl-undecaprenol N-acetylglucosamine transferase 2.